Reading from the N-terminus, the 398-residue chain is Alpha-2,8-sialyltransferase 8F (398 aa).

Residues 1 to 3 (MRS) lie on the Cytoplasmic side of the membrane. A helical; Signal-anchor for type II membrane protein membrane pass occupies residues 4-24 (GGTLFALIGSLMLLLLLRMLW). At 25 to 398 (CPADAPARSR…KLQFSKCETA (374 aa)) the chain is on the lumenal side. 4 N-linked (GlcNAc...) asparagine glycosylation sites follow: N66, N93, N151, and N196. 2 cysteine pairs are disulfide-bonded: C186/C335 and C200/C395. Substrate is bound by residues N214, 236–238 (NPS), and 322–324 (STG). H370 functions as the Proton donor/acceptor in the catalytic mechanism.

It belongs to the glycosyltransferase 29 family. Highly expressed in kidney and expressed and all tissues tested.

Its subcellular location is the golgi apparatus membrane. It catalyses the reaction a ganglioside GM3 + CMP-N-acetyl-beta-neuraminate = a ganglioside GD3 + CMP + H(+). The enzyme catalyses a ganglioside GM3 (d18:1(4E)) + CMP-N-acetyl-beta-neuraminate = a ganglioside GD3 (d18:1(4E)) + CMP + H(+). The catalysed reaction is a ganglioside GD1a (d18:1(4E)) + CMP-N-acetyl-beta-neuraminate = a ganglioside GT1a (d18:1(4E)) + CMP + H(+). It carries out the reaction a ganglioside GD1a + CMP-N-acetyl-beta-neuraminate = a ganglioside GT1a + CMP + H(+). It catalyses the reaction a ganglioside GM1b (d18:1(4E)) + CMP-N-acetyl-beta-neuraminate = a ganglioside GD1c (d18:1(4E)) + CMP + H(+). The enzyme catalyses a ganglioside GM1b + CMP-N-acetyl-beta-neuraminate = a ganglioside GD1c + CMP + H(+). The catalysed reaction is a ganglioside GM4 (d18:1(4E)) + CMP-N-acetyl-beta-neuraminate = an N-acetyl-alpha-neuraminosyl-(2-&gt;8)-N-acetyl-alpha-neuraminosyl-(2-&gt;3)-beta-D-galactosyl-(1&lt;-&gt;1')-N-acylsphing-4-enine + CMP + H(+). It carries out the reaction N-acetyl-alpha-neuraminosyl-(2-&gt;3)-beta-D-galactosyl-(1&lt;-&gt;1')-ceramide + CMP-N-acetyl-beta-neuraminate = N-acetyl-alpha-neuraminosyl-(2-&gt;8)-N-acetyl-alpha-neuraminosyl-(2-&gt;3)-beta-D-galactosyl-(1&lt;-&gt;1')-ceramide + CMP + H(+). It catalyses the reaction a ganglioside GT1b (d18:1(4E)) + CMP-N-acetyl-beta-neuraminate = a ganglioside GQ1b (d18:1(4E)) + CMP + H(+). The enzyme catalyses a ganglioside GT1b + CMP-N-acetyl-beta-neuraminate = a ganglioside GQ1b + CMP + H(+). It participates in protein modification; protein glycosylation. In terms of biological role, alpha-2,8-sialyltransferase that prefers O-glycans to N-glycans or glycolipids as acceptor substrates. The minimal acceptor substrate is the NeuAc-alpha-2,3(6)-Gal sequence at the non-reducing end of their carbohydrate groups. This is Alpha-2,8-sialyltransferase 8F from Mus musculus (Mouse).